The chain runs to 299 residues: ATP phosphoribosyltransferase (299 aa).

Belongs to the ATP phosphoribosyltransferase family. Long subfamily. Equilibrium between an active dimeric form, an inactive hexameric form and higher aggregates. Interconversion between the various forms is largely reversible and is influenced by the natural substrates and inhibitors of the enzyme. Requires Mg(2+) as cofactor.

The protein localises to the cytoplasm. The catalysed reaction is 1-(5-phospho-beta-D-ribosyl)-ATP + diphosphate = 5-phospho-alpha-D-ribose 1-diphosphate + ATP. The protein operates within amino-acid biosynthesis; L-histidine biosynthesis; L-histidine from 5-phospho-alpha-D-ribose 1-diphosphate: step 1/9. Feedback inhibited by histidine. Catalyzes the condensation of ATP and 5-phosphoribose 1-diphosphate to form N'-(5'-phosphoribosyl)-ATP (PR-ATP). Has a crucial role in the pathway because the rate of histidine biosynthesis seems to be controlled primarily by regulation of HisG enzymatic activity. The sequence is that of ATP phosphoribosyltransferase from Pectobacterium carotovorum subsp. carotovorum (strain PC1).